A 335-amino-acid chain; its full sequence is 2-acylglycerol O-acyltransferase 2 (335 aa).

2 consecutive transmembrane segments (helical) span residues 24 to 44 (WAVS…LLLF) and 104 to 124 (YIMG…NFCT). A glycan (N-linked (GlcNAc...) asparagine) is linked at asparagine 206.

Belongs to the diacylglycerol acyltransferase family.

It is found in the endoplasmic reticulum membrane. It localises to the cytoplasm. The protein localises to the perinuclear region. It carries out the reaction a 2-acylglycerol + an acyl-CoA = a 1,2-diacylglycerol + CoA. The catalysed reaction is a 2-acylglycerol + an acyl-CoA = a 1,2-diacyl-sn-glycerol + CoA. The enzyme catalyses a 2-acylglycerol + an acyl-CoA = a 2,3-diacyl-sn-glycerol + CoA. It catalyses the reaction a 1-acylglycerol + an acyl-CoA = a 1,2-diacylglycerol + CoA. It carries out the reaction a 1-acylglycerol + an acyl-CoA = a 1,3-diacylglycerol + CoA. The catalysed reaction is 1-O-alkylglycerol + an acyl-CoA = 1-O-alkyl-3-acylglycerol + CoA. The enzyme catalyses an acyl-CoA + a 1,2-diacyl-sn-glycerol = a triacyl-sn-glycerol + CoA. The protein operates within glycerolipid metabolism; triacylglycerol biosynthesis. Its function is as follows. Involved in glycerolipid synthesis and lipid metabolism. Catalyzes the formation of diacylglycerol, the precursor of triacylglycerol, by transferring the acyl chain of a fatty acyl-CoA to a monoacylglycerol. Plays a central role in absorption of dietary fat in the small intestine by catalyzing the resynthesis of triacylglycerol in enterocytes. Has a preference toward monoacylglycerols containing unsaturated fatty acids in an order of C18:3 &gt; C18:2 &gt; C18:1 &gt; C18:0 at sn-2. Able to use 1-monoalkylglycerol (1-MAkG, 1-O-alkylglycerol) as an acyl acceptor for the synthesis of monoalkyl-monoacylglycerol (MAMAG, 1-O-alkyl-3-acylglycerol or 1-O-alkyl-2-acylglycerol) and subsequently, with lower efficiency, may add another acyl chain producing monoalkyl-diacylglycerol (MADAG, 1-O-alkyl-2,3-diacylglycerol). Possesses weak but significant activity with diacylglycerol as substrate, producing triacylglycerol (triacyl-sn-glycerol). The chain is 2-acylglycerol O-acyltransferase 2 (mogat2) from Xenopus tropicalis (Western clawed frog).